The sequence spans 602 residues: Elongation factor 4 (602 aa).

The tr-type G domain occupies 7-189 (KYIRNFSIVA…AIVNKVPAPD (183 aa)). GTP-binding positions include 19–24 (DHGKST) and 136–139 (NKID).

This sequence belongs to the TRAFAC class translation factor GTPase superfamily. Classic translation factor GTPase family. LepA subfamily.

It is found in the cell membrane. The catalysed reaction is GTP + H2O = GDP + phosphate + H(+). Functionally, required for accurate and efficient protein synthesis under certain stress conditions. May act as a fidelity factor of the translation reaction, by catalyzing a one-codon backward translocation of tRNAs on improperly translocated ribosomes. Back-translocation proceeds from a post-translocation (POST) complex to a pre-translocation (PRE) complex, thus giving elongation factor G a second chance to translocate the tRNAs correctly. Binds to ribosomes in a GTP-dependent manner. The polypeptide is Elongation factor 4 (Clostridium botulinum (strain ATCC 19397 / Type A)).